Here is a 260-residue protein sequence, read N- to C-terminus: Putative ABC transporter substrate-binding lipoprotein YvgL (260 aa).

The first 20 residues, 1–20 (MFKKYSIFIAALTAFLLVAG), serve as a signal peptide directing secretion. Cys21 carries the N-palmitoyl cysteine lipid modification. Cys21 carries the S-diacylglycerol cysteine lipid modification. Residues Ser43, Ser71, Ala151, Val178, and Tyr196 each contribute to the molybdate site.

The protein belongs to the bacterial solute-binding protein ModA family.

It is found in the cell membrane. This Bacillus subtilis (strain 168) protein is Putative ABC transporter substrate-binding lipoprotein YvgL (yvgL).